The primary structure comprises 267 residues: 4-diphosphocytidyl-2-C-methyl-D-erythritol kinase (267 aa).

Residue K8 is part of the active site. An ATP-binding site is contributed by 90–100 (PIGAGLGGGSS). The active site involves D132.

Belongs to the GHMP kinase family. IspE subfamily.

The enzyme catalyses 4-CDP-2-C-methyl-D-erythritol + ATP = 4-CDP-2-C-methyl-D-erythritol 2-phosphate + ADP + H(+). It participates in isoprenoid biosynthesis; isopentenyl diphosphate biosynthesis via DXP pathway; isopentenyl diphosphate from 1-deoxy-D-xylulose 5-phosphate: step 3/6. In terms of biological role, catalyzes the phosphorylation of the position 2 hydroxy group of 4-diphosphocytidyl-2C-methyl-D-erythritol. In Azobacteroides pseudotrichonymphae genomovar. CFP2, this protein is 4-diphosphocytidyl-2-C-methyl-D-erythritol kinase.